The chain runs to 335 residues: Erlin-2 (335 aa).

Residues 1-2 are Cytoplasmic-facing; that stretch reads MS. Residues 3–23 traverse the membrane as a helical segment; sequence HAGAIAAIGVALIAAALFSAI. The Lumenal segment spans residues 24-335; sequence HKIEEGHVGV…ALNEPAVGDE (312 aa). N-linked (GlcNAc...) asparagine glycosylation occurs at N106. Over residues 310–321 the composition is skewed to polar residues; it reads AGPSVQSATLLQ. A disordered region spans residues 310 to 335; it reads AGPSVQSATLLQDDSPALNEPAVGDE.

This sequence belongs to the band 7/mec-2 family.

The protein localises to the endoplasmic reticulum membrane. Functionally, mediates the endoplasmic reticulum-associated degradation (ERAD) of inositol 1,4,5-trisphosphate receptors (IP3Rs). Promotes sterol-accelerated ERAD of HMGCR. Involved in regulation of cellular cholesterol homeostasis by regulation the SREBP signaling pathway. This is Erlin-2 (erlin2) from Xenopus tropicalis (Western clawed frog).